The following is a 100-amino-acid chain: NADH-quinone oxidoreductase subunit K (100 aa).

3 helical membrane passes run 2–22, 29–49, and 63–83; these read IGLSHYLIVSALIFSIGLMGV, LMLFFATEVMLNAVNIAFAAI, and FFIIAIAASEVAVGLGILIVL.

This sequence belongs to the complex I subunit 4L family. In terms of assembly, NDH-1 is composed of 14 different subunits. Subunits NuoA, H, J, K, L, M, N constitute the membrane sector of the complex.

Its subcellular location is the cell inner membrane. It catalyses the reaction a quinone + NADH + 5 H(+)(in) = a quinol + NAD(+) + 4 H(+)(out). NDH-1 shuttles electrons from NADH, via FMN and iron-sulfur (Fe-S) centers, to quinones in the respiratory chain. The immediate electron acceptor for the enzyme in this species is believed to be ubiquinone. Couples the redox reaction to proton translocation (for every two electrons transferred, four hydrogen ions are translocated across the cytoplasmic membrane), and thus conserves the redox energy in a proton gradient. The chain is NADH-quinone oxidoreductase subunit K from Sulfurovum sp. (strain NBC37-1).